Here is an 83-residue protein sequence, read N- to C-terminus: Putative potassium channel toxin Ts20 (83 aa).

The first 18 residues, 1 to 18 (MKLDIVLIMFVTFSTTLA), serve as a signal peptide directing secretion.

Contains 3 disulfide bonds. Expressed by the venom gland.

The protein resides in the secreted. Its function is as follows. Reversibly inhibits potassium channels. In Tityus serrulatus (Brazilian scorpion), this protein is Putative potassium channel toxin Ts20.